The sequence spans 887 residues: Valine--tRNA ligase (887 aa).

Residues 45–55 (PNVTGILHMGH) carry the 'HIGH' region motif. Positions 528-532 (KMSKS) match the 'KMSKS' region motif. Position 531 (Lys-531) interacts with ATP. A coiled-coil region spans residues 817–887 (TGLLNNEAEI…LKESLKSFEE (71 aa)).

The protein belongs to the class-I aminoacyl-tRNA synthetase family. ValS type 1 subfamily. In terms of assembly, monomer.

The protein localises to the cytoplasm. The catalysed reaction is tRNA(Val) + L-valine + ATP = L-valyl-tRNA(Val) + AMP + diphosphate. In terms of biological role, catalyzes the attachment of valine to tRNA(Val). As ValRS can inadvertently accommodate and process structurally similar amino acids such as threonine, to avoid such errors, it has a 'posttransfer' editing activity that hydrolyzes mischarged Thr-tRNA(Val) in a tRNA-dependent manner. In Fusobacterium nucleatum subsp. nucleatum (strain ATCC 25586 / DSM 15643 / BCRC 10681 / CIP 101130 / JCM 8532 / KCTC 2640 / LMG 13131 / VPI 4355), this protein is Valine--tRNA ligase.